A 147-amino-acid polypeptide reads, in one-letter code: UPF0735 ACT domain-containing protein YszB (147 aa).

The region spanning 70–145 (TLFFHLEDRS…FVEKVEILGS (76 aa)) is the ACT domain.

This sequence belongs to the UPF0735 family.

The polypeptide is UPF0735 ACT domain-containing protein YszB (yszB) (Bacillus subtilis (strain 168)).